The chain runs to 956 residues: UvrABC system protein A (956 aa).

33-40 serves as a coordination point for ATP; sequence GLSGSGKS. The C4-type zinc finger occupies 252-279; it reads CPYCGFSVGELEPRMFSFNSPFGACPTC. ABC transporter domains follow at residues 309–587 and 607–936; these read WRPI…KNSI and GNGL…KYLK. 639 to 646 contacts ATP; the sequence is GVSGSGKS. The segment at 738–764 adopts a C4-type zinc-finger fold; that stretch reads CEACKGDGIIKIEMHFLPDVYVPCEVC.

Belongs to the ABC transporter superfamily. UvrA family. Forms a heterotetramer with UvrB during the search for lesions.

It is found in the cytoplasm. In terms of biological role, the UvrABC repair system catalyzes the recognition and processing of DNA lesions. UvrA is an ATPase and a DNA-binding protein. A damage recognition complex composed of 2 UvrA and 2 UvrB subunits scans DNA for abnormalities. When the presence of a lesion has been verified by UvrB, the UvrA molecules dissociate. The polypeptide is UvrABC system protein A (Listeria monocytogenes serotype 4b (strain F2365)).